Here is a 404-residue protein sequence, read N- to C-terminus: F-box protein At2g17036 (404 aa).

Residues 2–50 (MDWATLPKDLLDLISKCLESSFDLIQFRSVCSSWRSAAGPKRLLWAHNL) enclose the F-box domain.

The sequence is that of F-box protein At2g17036 from Arabidopsis thaliana (Mouse-ear cress).